Reading from the N-terminus, the 602-residue chain is Elongation factor 4 (602 aa).

The tr-type G domain maps to 7–188; the sequence is ENIRNFSIIA…SIIRLVPPPK (182 aa). Residues 19–24 and 135–138 each bind GTP; these read DHGKST and NKID.

It belongs to the TRAFAC class translation factor GTPase superfamily. Classic translation factor GTPase family. LepA subfamily.

It localises to the cell inner membrane. It carries out the reaction GTP + H2O = GDP + phosphate + H(+). Functionally, required for accurate and efficient protein synthesis under certain stress conditions. May act as a fidelity factor of the translation reaction, by catalyzing a one-codon backward translocation of tRNAs on improperly translocated ribosomes. Back-translocation proceeds from a post-translocation (POST) complex to a pre-translocation (PRE) complex, thus giving elongation factor G a second chance to translocate the tRNAs correctly. Binds to ribosomes in a GTP-dependent manner. The chain is Elongation factor 4 from Chlamydia trachomatis serovar D (strain ATCC VR-885 / DSM 19411 / UW-3/Cx).